Reading from the N-terminus, the 291-residue chain is uncharacterized protein (291 aa).

In terms of domain architecture, HTH lysR-type spans 1–58; the sequence is MDLKWLQTFIAAAESESFREAAEHLYLTQPAVSQHMRKLEDELDMRLFLHSGRRVVLT. A DNA-binding region (H-T-H motif) is located at residues 18–37; that stretch reads FREAAEHLYLTQPAVSQHMR.

This sequence belongs to the LysR transcriptional regulatory family.

This is an uncharacterized protein from Bacillus subtilis (strain 168).